Here is a 400-residue protein sequence, read N- to C-terminus: NADPH dehydrogenase 2 (400 aa).

Residues Thr38 and Gln115 each coordinate FMN. Substrate-binding residues include His192 and Asn195. Tyr197 functions as the Proton donor in the catalytic mechanism. The FMN site is built by Arg244 and Arg349. Ser353 carries the post-translational modification Phosphoserine. Substrate is bound at residue Tyr376. A Phosphoserine modification is found at Ser379.

This sequence belongs to the NADH:flavin oxidoreductase/NADH oxidase family. In terms of assembly, homodimer or heterodimer with OYE3. The cofactor is FMN.

The protein localises to the cytoplasm. It is found in the nucleus. It localises to the mitochondrion. The enzyme catalyses A + NADPH + H(+) = AH2 + NADP(+). Functionally, flavin-dependent enoate reductase that catalyzes the chemo- and stereoslective hydrogenation of electron-poor alkenes. The enzyme is reduced by NADPH, and oxygen, quinones, and alpha,beta-unsaturated aldehydes and ketones can act as electron acceptors to complete catalytic turnover. The physiological oxidant remains elusive. Has an antioxidant activity, reducing reactive oxygen species (ROS) levels when overexpressed. Formation of OYE2-OYE3 heterodimers contribute to the induction of programmed cell death upon oxidative stress. This is NADPH dehydrogenase 2 from Saccharomyces cerevisiae (strain ATCC 204508 / S288c) (Baker's yeast).